The primary structure comprises 122 residues: HetP-like commitment protein Alr3234 (122 aa).

It belongs to the HetP family. As to quaternary structure, in bacterial two-hybrid assays interacts robustly with itself, Asl1930, Alr2902 and HetR and weakly with HetP.

Functionally, delays heterocyst differentiation and commitment when nitrogen is limiting. Interplay between the 4 HetP paralogs controls the timing of commitment to heterocyst formation and its duration. Epistatic analysis show that the 3 paralogs act upstream of hetP to delay commitment (asl1930, alr3234) or inhibit development (alr2902). Asl1930 and Alr3234 must also attenuate the activity of Alr2902. Ectopic expression does not complement a hetP deletion. The protein is HetP-like commitment protein Alr3234 of Nostoc sp. (strain PCC 7120 / SAG 25.82 / UTEX 2576).